The following is a 472-amino-acid chain: Adenosylhomocysteinase (472 aa).

Residues Thr61, Asp139, and Glu198 each coordinate substrate. Position 199-201 (199-201 (TTT)) interacts with NAD(+). Positions 228 and 232 each coordinate substrate. NAD(+) is bound by residues Asn233, 262–267 (GFGDVG), Glu285, Asn320, 341–343 (IGH), and Asn386.

Belongs to the adenosylhomocysteinase family. It depends on NAD(+) as a cofactor.

It is found in the cytoplasm. The catalysed reaction is S-adenosyl-L-homocysteine + H2O = L-homocysteine + adenosine. It participates in amino-acid biosynthesis; L-homocysteine biosynthesis; L-homocysteine from S-adenosyl-L-homocysteine: step 1/1. Its function is as follows. May play a key role in the regulation of the intracellular concentration of adenosylhomocysteine. This chain is Adenosylhomocysteinase, found in Sphingopyxis alaskensis (strain DSM 13593 / LMG 18877 / RB2256) (Sphingomonas alaskensis).